The chain runs to 842 residues: Cullin-8 (842 aa).

The interval 1–50 (MINESVSKREGFHESISRETSASNALGLYNKFNDERNPRYRTMIAELHEF) is required for interaction with MMS1. Polar residues predominate over residues 755-765 (LQSSNTGGERT). Residues 755–775 (LQSSNTGGERTSSAHHEGSNS) form a disordered region. Lys-791 participates in a covalent cross-link: Glycyl lysine isopeptide (Lys-Gly) (interchain with G-Cter in NEDD8).

This sequence belongs to the cullin family. Component of multiple cullin-RING ligases (CRLs) composed of 4 subunits: the RING protein HRT1, the cullin RTT101, a linker protein MMS1, and one of many alternative substrate receptors belonging to a protein family described as DCAF (DDB1- and CUL4-associated factor). Component of a RTT101(MMS1-MMS22) complex with the substrate receptor MMS22. This complex further interacts with RTT107 and CTF4 to form RTT101-MMS1-MMS22-RTT107 and RTT101-MMS1-MMS22-CTF4 complexes respectively. Component of a RTT101(MSS1-CRT10) complex with the substrate receptor CRT10. Component of a RTT101(MSS1-ESC2) complex with the potential substrate receptor ESC2. Component of a RTT101(MSS1-ORC5) complex with the potential substrate receptor ORC5. Interacts (via C-ter) with HRT1; required for ubiquitin-ligase activity. Interacts (via N-ter) with MMS1. In terms of processing, neddylated. HRT1-binding is necessary for RUB1/NEDD8 modification of RTT101. The modification enhances ubiquitin-ligase activity.

Its subcellular location is the cytoplasm. The protein localises to the nucleus. Its pathway is protein modification; protein ubiquitination. Its function is as follows. Core component of multiple cullin-RING-based E3 ubiquitin-protein ligase complexes (CRLs), which mediate the ubiquitination of target proteins. As a scaffold protein may contribute to catalysis through positioning of the substrate and the ubiquitin-conjugating enzyme. The CRL associates with CDC34 as the E2 ubiquitin-conjugating enzyme. The functional specificity of the CRL depends on the type of the associated substrate receptor protein. RTT101(MMS1-MMS22) promotes fork progression through damaged DNA or natural pause sites by stabilizing replication proteins like the replication fork-pausing complex (FPC) and leading-strand polymerase at stalled replication forks. RTT101(MMS1-MMS22) ubiquitinates the acetylated histones H3K56ac-H4 at lysine residues H3K121, H3K122 and H3K125. Ubiquitination is required for efficient histone deposition during replication-coupled nucleosome assembly, probably by facilitating the transfer of H3-H4 from ASF1 to other chaperones involved in histone deposition. RTT101(MMS1-CRT10) may regulate nucleotide synthesis through transcriptional regulation of ribonucleotide reductase. RTT101(MMS1) is also involved in the non-functional rRNA decay (NRD) of 25S rRNA through the selective, ubiquitination-dependent degradation of nonfunctional ribosomal particles. Ubiquitinates the FACT (facilitates chromatin transcription) complex subunit SPT16 in an MMS1-independent manner. Involved in regulation of Ty1 transposition and protects the genome from Ty1 integration upstream of tRNA genes. The sequence is that of Cullin-8 (RTT101) from Saccharomyces cerevisiae (strain ATCC 204508 / S288c) (Baker's yeast).